The following is a 388-amino-acid chain: Serpin B11 (388 aa).

The segment at 338–362 (EEGTEAAAATGESISVKRLPVTVQF) is RCL.

Belongs to the serpin family. Ov-serpin subfamily. In terms of tissue distribution, expressed in eye, lung, lymphocytes, thymus, stomach, uterus, heart, brain, liver, skeletal muscle, and in day 7, 15, and 17 embryos.

Its subcellular location is the cytoplasm. Functionally, inhibitor of serine proteases. Has moderate inhibitory activity for trypsin-like peptidases, but also some activity with cysteine peptidases, cathepsin L, K, and V, and the serine peptidase, tryptase gamma. The chain is Serpin B11 (Serpinb11) from Mus musculus (Mouse).